We begin with the raw amino-acid sequence, 142 residues long: Large ribosomal subunit protein uL13 (142 aa).

Belongs to the universal ribosomal protein uL13 family. As to quaternary structure, part of the 50S ribosomal subunit.

Its function is as follows. This protein is one of the early assembly proteins of the 50S ribosomal subunit, although it is not seen to bind rRNA by itself. It is important during the early stages of 50S assembly. The polypeptide is Large ribosomal subunit protein uL13 (Hamiltonella defensa subsp. Acyrthosiphon pisum (strain 5AT)).